A 648-amino-acid polypeptide reads, in one-letter code: Zinc finger protein 202 (648 aa).

Lys-22 is covalently cross-linked (Glycyl lysine isopeptide (Lys-Gly) (interchain with G-Cter in SUMO2)). Residues His-46–Gln-127 enclose the SCAN box domain. Residues Ser-146–Gly-221 are disordered. The span at Pro-165 to Pro-182 shows a compositional bias: polar residues. In terms of domain architecture, KRAB spans Val-237–Glu-308. 2 consecutive C2H2-type zinc fingers follow at residues His-397–His-419 and Tyr-425–His-447. Residues Lys-454 and Lys-460 each participate in a glycyl lysine isopeptide (Lys-Gly) (interchain with G-Cter in SUMO2) cross-link. A Phosphoserine modification is found at Ser-466. The C2H2-type 3 zinc-finger motif lies at Tyr-481–His-503. Glycyl lysine isopeptide (Lys-Gly) (interchain with G-Cter in SUMO2) cross-links involve residues Lys-507 and Lys-521. 5 consecutive C2H2-type zinc fingers follow at residues Phe-509–His-531, Tyr-537–His-559, Tyr-565–His-587, Cys-593–His-615, and Phe-621–His-643.

In terms of assembly, interacts with SDP1. Highly expressed in testis. Also expressed in breast carcinoma cell lines.

It is found in the nucleus. Its function is as follows. Transcriptional repressor that binds to elements found predominantly in genes that participate in lipid metabolism. Among its targets are structural components of lipoprotein particles (apolipoproteins AIV, CIII, and E), enzymes involved in lipid processing (lipoprotein lipase, lecithin cholesteryl ester transferase), transporters involved in lipid homeostasis (ABCA1, ABCG1), and several genes involved in processes related to energy metabolism and vascular disease. The protein is Zinc finger protein 202 (ZNF202) of Homo sapiens (Human).